Reading from the N-terminus, the 75-residue chain is Small integral membrane protein 7 (75 aa).

A signal peptide spans 1 to 17; the sequence is MIGDILLFGTLLMNAGA. The Extracellular portion of the chain corresponds to 18–53; sequence VLNFKLKKKDTQGFGEESREPSTGDNIREFLLSLRY. The helical transmembrane segment at 54–74 threads the bilayer; it reads FRIFIALWNIFMMFCMIVLFG. A topological domain (cytoplasmic) is located at residue Ser75.

Belongs to the SMIM7 family.

It is found in the membrane. This chain is Small integral membrane protein 7 (SMIM7), found in Homo sapiens (Human).